The primary structure comprises 476 residues: Siroheme synthase (476 aa).

Residues 1–203 (MNYFPVFADL…RQIEAAKKEL (203 aa)) are precorrin-2 dehydrogenase /sirohydrochlorin ferrochelatase. NAD(+) contacts are provided by residues 22–23 (TI) and 43–44 (QK). Position 128 is a phosphoserine (Ser-128). Residues 214-476 (GSVSLVGAGP…LDSLRIERVA (263 aa)) form a uroporphyrinogen-III C-methyltransferase region. Position 223 (Pro-223) interacts with S-adenosyl-L-methionine. The active-site Proton acceptor is the Asp-246. The active-site Proton donor is Lys-268. Residues 299-301 (GGD), Val-304, 329-330 (TA), Met-381, and Gly-410 each bind S-adenosyl-L-methionine.

In the N-terminal section; belongs to the precorrin-2 dehydrogenase / sirohydrochlorin ferrochelatase family. This sequence in the C-terminal section; belongs to the precorrin methyltransferase family.

The catalysed reaction is uroporphyrinogen III + 2 S-adenosyl-L-methionine = precorrin-2 + 2 S-adenosyl-L-homocysteine + H(+). It carries out the reaction precorrin-2 + NAD(+) = sirohydrochlorin + NADH + 2 H(+). The enzyme catalyses siroheme + 2 H(+) = sirohydrochlorin + Fe(2+). It participates in cofactor biosynthesis; adenosylcobalamin biosynthesis; precorrin-2 from uroporphyrinogen III: step 1/1. It functions in the pathway cofactor biosynthesis; adenosylcobalamin biosynthesis; sirohydrochlorin from precorrin-2: step 1/1. The protein operates within porphyrin-containing compound metabolism; siroheme biosynthesis; precorrin-2 from uroporphyrinogen III: step 1/1. Its pathway is porphyrin-containing compound metabolism; siroheme biosynthesis; siroheme from sirohydrochlorin: step 1/1. It participates in porphyrin-containing compound metabolism; siroheme biosynthesis; sirohydrochlorin from precorrin-2: step 1/1. Its function is as follows. Multifunctional enzyme that catalyzes the SAM-dependent methylations of uroporphyrinogen III at position C-2 and C-7 to form precorrin-2 via precorrin-1. Then it catalyzes the NAD-dependent ring dehydrogenation of precorrin-2 to yield sirohydrochlorin. Finally, it catalyzes the ferrochelation of sirohydrochlorin to yield siroheme. In Mannheimia succiniciproducens (strain KCTC 0769BP / MBEL55E), this protein is Siroheme synthase.